We begin with the raw amino-acid sequence, 88 residues long: Serine protease inhibitor Kazal-type 11 (88 aa).

An N-terminal signal peptide occupies residues 1–24 (MSSTWIKFLFILTLVLLPYFVAES). Positions 32-87 (LRKVPNCTLYKSESDCSRTLIPVCADNQMTYYNACYFCLEQLVSPIKYKYHGICTK) constitute a Kazal-like domain. N37 carries an N-linked (GlcNAc...) asparagine glycan. Disulfide bonds link C38/C69, C47/C66, and C55/C85.

Expressed in epydiymis, in the caput. Also expressed in seminal vesicles.

The protein localises to the secreted. In terms of biological role, probable serine protease inhibitor. In Mus musculus (Mouse), this protein is Serine protease inhibitor Kazal-type 11 (Spink11).